Reading from the N-terminus, the 610-residue chain is DNA mismatch repair protein MutL (610 aa).

Belongs to the DNA mismatch repair MutL/HexB family.

Its function is as follows. This protein is involved in the repair of mismatches in DNA. It is required for dam-dependent methyl-directed DNA mismatch repair. May act as a 'molecular matchmaker', a protein that promotes the formation of a stable complex between two or more DNA-binding proteins in an ATP-dependent manner without itself being part of a final effector complex. This is DNA mismatch repair protein MutL from Rickettsia rickettsii (strain Sheila Smith).